We begin with the raw amino-acid sequence, 236 residues long: NAD(P)H-hydrate epimerase (236 aa).

In terms of domain architecture, YjeF N-terminal spans 11–217; the sequence is AAALDQELMS…AIASKYGFEV (207 aa). A (6S)-NADPHX-binding site is contributed by 61-65; the sequence is NNGGD. 2 residues coordinate K(+): asparagine 62 and aspartate 123. Residues 127–133 and aspartate 156 each bind (6S)-NADPHX; that span reads GFSFSGE. Serine 159 lines the K(+) pocket.

This sequence belongs to the NnrE/AIBP family. The cofactor is K(+).

It localises to the cytoplasm. The protein localises to the mitochondrion. The enzyme catalyses (6R)-NADHX = (6S)-NADHX. It catalyses the reaction (6R)-NADPHX = (6S)-NADPHX. Catalyzes the epimerization of the S- and R-forms of NAD(P)HX, a damaged form of NAD(P)H that is a result of enzymatic or heat-dependent hydration. This is a prerequisite for the S-specific NAD(P)H-hydrate dehydratase to allow the repair of both epimers of NAD(P)HX. This chain is NAD(P)H-hydrate epimerase, found in Fusarium vanettenii (strain ATCC MYA-4622 / CBS 123669 / FGSC 9596 / NRRL 45880 / 77-13-4) (Fusarium solani subsp. pisi).